A 127-amino-acid chain; its full sequence is Cuticle protein 4 (127 aa).

Gln-1 carries the post-translational modification Pyrrolidone carboxylic acid. A run of 2 repeats spans residues 31-39 and 84-92.

The protein is Cuticle protein 4 of Blaberus craniifer (Death's head cockroach).